Consider the following 290-residue polypeptide: 33 kDa chaperonin (290 aa).

Intrachain disulfides connect C235–C237 and C268–C271.

This sequence belongs to the HSP33 family. Under oxidizing conditions two disulfide bonds are formed involving the reactive cysteines. Under reducing conditions zinc is bound to the reactive cysteines and the protein is inactive.

It is found in the cytoplasm. Its function is as follows. Redox regulated molecular chaperone. Protects both thermally unfolding and oxidatively damaged proteins from irreversible aggregation. Plays an important role in the bacterial defense system toward oxidative stress. In Streptococcus mutans serotype c (strain ATCC 700610 / UA159), this protein is 33 kDa chaperonin.